The chain runs to 404 residues: Protrudin (404 aa).

Positions 1–25 are disordered; that stretch reads MQSSDRDLSGPEASPSVMPEVLSEC. The Cytoplasmic segment spans residues 1–63; sequence MQSSDRDLSG…LKDAGDGVRY (63 aa). The interval 1–92 is sufficient for homooligomerization; that stretch reads MQSSDRDLSG…LFLTLNEGAW (92 aa). The tract at residues 1–205 is sufficient for localization to endoplasmic reticulum tubular network and for interactions with REEP1, REEP5, ATL1, ATL2, ATL3 and SPAST; sequence MQSSDRDLSG…LYLLPLCWVL (205 aa). The tract at residues 51 to 64 is necessary for interaction with RAB11A and function in neurite outgrowth; sequence LEPLKDAGDGVRYL. A helical membrane pass occupies residues 64 to 85; that stretch reads LLRWQMPLCSLLTCLGLNILFL. Over 86–90 the chain is Lumenal; the sequence is TLNEG. The helical transmembrane segment at 91–109 threads the bilayer; the sequence is AWYSVGALIISVPALLGYL. Over 110-187 the chain is Cytoplasmic; it reads QEVCRAQLPE…NPVVSSQFYG (78 aa). The helical intramembrane region spans 188–208; the sequence is ALLGMVCMLYLLPLCWVLALL. At 209-404 the chain is on the cytoplasmic side; it reads NSTLFLGNGE…CASCNQTLSK (196 aa). The tract at residues 259–299 is disordered; the sequence is DSTPAPTPTEDLTPGSVEEAEEAEPDEEFKDAIEEDDEGTP. The necessary for interaction with KIF5A stretch occupies residues 271-354; the sequence is TPGSVEEAEE…GCAATFSVLK (84 aa). The span at 276-299 shows a compositional bias: acidic residues; sequence EEAEEAEPDEEFKDAIEEDDEGTP. Residues 286–292 are necessary for interaction with VAPA; it reads EFKDAIE. The segment at 337-403 adopts an FYVE-type zinc-finger fold; sequence TNNFGNCAGC…VCASCNQTLS (67 aa). 8 residues coordinate Zn(2+): C343, C346, C359, C362, C367, C370, C395, and C398.

In terms of assembly, can form homooligomers (monomers, dimers and tetramers). Interacts with FKBP8; may negatively regulate ZFYVE27 phosphorylation. Interacts with VAPA (via MSP domain); may regulate ZFYVE27 retention in the endoplasmic reticulum and its function in cell projections formation. Interacts with VAPB (via MSP domain). Interacts with RAB11A (GDP-bound form); regulates RAB11A. Interacts with RAB11B (GDP-bound form), REEP1, REEP5, ATL1, ATL2, ATL3, SPAST, SURF4, KIF5A, KIF5B, KIF5C and RTN3. Phosphorylated. Phosphorylation is induced by NGF through the MAPK/ERK pathway and modulates interaction with RAB11A.

The protein resides in the recycling endosome membrane. The protein localises to the endoplasmic reticulum membrane. It is found in the cell projection. It localises to the growth cone membrane. Its function is as follows. Key regulator of RAB11-dependent vesicular trafficking during neurite extension through polarized membrane transport. Promotes axonal elongation and contributes to the establishment of neuronal cell polarity. Involved in nerve growth factor-induced neurite formation in VAPA-dependent manner. Contributes to both the formation and stabilization of the tubular ER network. Involved in ER morphogenesis by regulating the sheet-to-tubule balance and possibly the density of tubule interconnections. Acts as an adapter protein that facilitates the interaction of KIF5A with VAPA, VAPB, SURF4, RAB11A, RAB11B and RTN3 and the ZFYVE27-KIF5A complex contributes to the transport of these proteins in neurons. Can induce formation of neurite-like membrane protrusions in non-neuronal cells in a KIF5A/B-dependent manner. This is Protrudin (Zfyve27) from Rattus norvegicus (Rat).